The chain runs to 2455 residues: Ectopic P granules protein 5 homolog (2455 aa).

Positions 1–42 are disordered; sequence MATLEKPKKEKSKKSRNRVPIEKEEEEPAELSTSEEQRPAEN. S44 is subject to Phosphoserine. The tract at residues 77–105 is disordered; sequence VTSQEPEGTQEPTETEAQPSAPSAPPSTT. Residues 80–97 are compositionally biased toward low complexity; the sequence is QEPEGTQEPTETEAQPSA. Position 467 is a phosphoserine (S467).

This sequence belongs to the EPG5 family.

It is found in the cytoplasm. Its subcellular location is the perinuclear region. The protein localises to the lysosome. Functionally, involved in autophagy. Plays a role in late steps of autophagy. In Drosophila melanogaster (Fruit fly), this protein is Ectopic P granules protein 5 homolog.